The following is a 251-amino-acid chain: MTQQLKFILTREEAASKGVSRPSDLVKLEEEAMILARAPISGVQDAVLGLASSDRIFLGVNVEFEGLPLHHSISAEQFLVANLALNFEQELHACLIPSRFYLESFEEDVPLLLVPQNNRLAHSDPFSAAEICSNPEHCSHLKCRALTAANKSNAQYSKCPSGVALICEGEVYGGWCIESAAYNLSLGPVQAALVDFMARGEGKGFEMITGAVLVEMNDAKVSQEATARILLKTIAPGCNFSVFRCHKTAEN.

Substrate is bound at residue 61–63 (NVE). The active-site Proton donor is glutamate 76. In terms of domain architecture, CMP/dCMP-type deaminase spans 136 to 251 (EHCSHLKCRA…VFRCHKTAEN (116 aa)).

Belongs to the cytidine and deoxycytidylate deaminase family. Homodimer.

The sequence is that of Probable inactive cytidine deaminase 4 (CDA4) from Arabidopsis thaliana (Mouse-ear cress).